The primary structure comprises 259 residues: Phosphoadenosine 5'-phosphosulfate reductase (259 aa).

Cys-244 acts as the Nucleophile; cysteine thiosulfonate intermediate in catalysis.

Belongs to the PAPS reductase family. CysH subfamily.

The protein localises to the cytoplasm. The enzyme catalyses [thioredoxin]-disulfide + sulfite + adenosine 3',5'-bisphosphate + 2 H(+) = [thioredoxin]-dithiol + 3'-phosphoadenylyl sulfate. It functions in the pathway sulfur metabolism; hydrogen sulfide biosynthesis; sulfite from sulfate: step 3/3. In terms of biological role, catalyzes the formation of sulfite from phosphoadenosine 5'-phosphosulfate (PAPS) using thioredoxin as an electron donor. This chain is Phosphoadenosine 5'-phosphosulfate reductase, found in Vibrio parahaemolyticus serotype O3:K6 (strain RIMD 2210633).